We begin with the raw amino-acid sequence, 150 residues long: Large ribosomal subunit protein uL13 (150 aa).

It belongs to the universal ribosomal protein uL13 family. Part of the 50S ribosomal subunit.

Its function is as follows. This protein is one of the early assembly proteins of the 50S ribosomal subunit, although it is not seen to bind rRNA by itself. It is important during the early stages of 50S assembly. This is Large ribosomal subunit protein uL13 from Chlamydia trachomatis serovar A (strain ATCC VR-571B / DSM 19440 / HAR-13).